The sequence spans 390 residues: Mannitol-1-phosphate 5-dehydrogenase (390 aa).

3–14 (ALHFGAGNIGRG) serves as a coordination point for NAD(+).

This sequence belongs to the mannitol dehydrogenase family.

The catalysed reaction is D-mannitol 1-phosphate + NAD(+) = beta-D-fructose 6-phosphate + NADH + H(+). This is Mannitol-1-phosphate 5-dehydrogenase from Buchnera aphidicola subsp. Baizongia pistaciae (strain Bp).